Reading from the N-terminus, the 428-residue chain is Elongation factor 1-alpha (428 aa).

The tr-type G domain occupies K5–T217. The interval G14–S21 is G1. G14–S21 contacts GTP. Position 21 (S21) interacts with Mg(2+). The segment at G68–D72 is G2. Residues D89–G92 form a G3 region. GTP-binding positions include D89–H93 and N144–D147. Residues N144–D147 form a G4 region. Residues S181–W183 form a G5 region.

This sequence belongs to the TRAFAC class translation factor GTPase superfamily. Classic translation factor GTPase family. EF-Tu/EF-1A subfamily.

It is found in the cytoplasm. The catalysed reaction is GTP + H2O = GDP + phosphate + H(+). In terms of biological role, GTP hydrolase that promotes the GTP-dependent binding of aminoacyl-tRNA to the A-site of ribosomes during protein biosynthesis. This Thermococcus sibiricus (strain DSM 12597 / MM 739) protein is Elongation factor 1-alpha.